A 185-amino-acid chain; its full sequence is Capsid protein (185 aa).

The segment at Asn136–Cys185 is disordered. A compositionally biased stretch (basic residues) spans Val149–Ser178. Residues Ser157, Ser164, and Ser172 each carry the phosphoserine; by host modification. Residues Ser157 to Pro163 form a 1; half-length repeat. A 3 X 8 AA repeats of S-P-R-R-R-[PR]-S-Q region spans residues Ser157–Gln179. The Bipartite nuclear localization signal signature appears at Arg160–Arg177. A run of 2 repeats spans residues Ser164–Gln171 and Ser172–Gln179. Residues Gln179–Cys185 form an RNA binding region.

This sequence belongs to the orthohepadnavirus core antigen family. In terms of assembly, homodimerizes, then multimerizes. Interacts with cytosol exposed regions of viral L glycoprotein present in the reticulum-to-Golgi compartment. Interacts with human FLNB. Phosphorylated form interacts with host importin alpha; this interaction depends on the exposure of the NLS, which itself depends upon genome maturation and/or phosphorylation of the capsid protein. Interacts with host NUP153. In terms of processing, phosphorylated by host SRPK1, SRPK2, and maybe protein kinase C or GAPDH. Phosphorylation is critical for pregenomic RNA packaging. Protein kinase C phosphorylation is stimulated by HBx protein and may play a role in transport of the viral genome to the nucleus at the late step during the viral replication cycle.

The protein resides in the virion. It localises to the host cytoplasm. Its function is as follows. Self assembles to form an icosahedral capsid. Most capsids appear to be large particles with an icosahedral symmetry of T=4 and consist of 240 copies of capsid protein, though a fraction forms smaller T=3 particles consisting of 180 capsid proteins. Entering capsids are transported along microtubules to the nucleus. Phosphorylation of the capsid is thought to induce exposure of nuclear localization signal in the C-terminal portion of the capsid protein that allows binding to the nuclear pore complex via the importin (karyopherin-) alpha and beta. Capsids are imported in intact form through the nuclear pore into the nuclear basket, where it probably binds NUP153. Only capsids that contain the mature viral genome can release the viral DNA and capsid protein into the nucleoplasm. Immature capsids get stuck in the basket. Capsids encapsulate the pre-genomic RNA and the P protein. Pre-genomic RNA is reverse-transcribed into DNA while the capsid is still in the cytoplasm. The capsid can then either be directed to the nucleus, providing more genomes for transcription, or bud through the endoplasmic reticulum to provide new virions. In Homo sapiens (Human), this protein is Capsid protein.